A 265-amino-acid chain; its full sequence is 4-hydroxy-tetrahydrodipicolinate reductase (265 aa).

Residues 7 to 12 (GASGRM), aspartate 33, 96 to 98 (GTT), and 120 to 123 (AANM) contribute to the NAD(+) site. The active-site Proton donor/acceptor is the histidine 153. Histidine 154 is a binding site for (S)-2,3,4,5-tetrahydrodipicolinate. Lysine 157 functions as the Proton donor in the catalytic mechanism. Residue 163 to 164 (GT) participates in (S)-2,3,4,5-tetrahydrodipicolinate binding.

Belongs to the DapB family.

Its subcellular location is the cytoplasm. The enzyme catalyses (S)-2,3,4,5-tetrahydrodipicolinate + NAD(+) + H2O = (2S,4S)-4-hydroxy-2,3,4,5-tetrahydrodipicolinate + NADH + H(+). The catalysed reaction is (S)-2,3,4,5-tetrahydrodipicolinate + NADP(+) + H2O = (2S,4S)-4-hydroxy-2,3,4,5-tetrahydrodipicolinate + NADPH + H(+). It participates in amino-acid biosynthesis; L-lysine biosynthesis via DAP pathway; (S)-tetrahydrodipicolinate from L-aspartate: step 4/4. In terms of biological role, catalyzes the conversion of 4-hydroxy-tetrahydrodipicolinate (HTPA) to tetrahydrodipicolinate. The chain is 4-hydroxy-tetrahydrodipicolinate reductase from Cupriavidus metallidurans (strain ATCC 43123 / DSM 2839 / NBRC 102507 / CH34) (Ralstonia metallidurans).